We begin with the raw amino-acid sequence, 364 residues long: 3-isopropylmalate dehydrogenase (364 aa).

An NAD(+)-binding site is contributed by 79-92; the sequence is GPKWEHLPPDQQPE. Positions 100, 110, 139, and 228 each coordinate substrate. 3 residues coordinate Mg(2+): Asp228, Asp252, and Asp256. Position 286–298 (286–298) interacts with NAD(+); sequence GSAPDIAGKNIAN.

It belongs to the isocitrate and isopropylmalate dehydrogenases family. LeuB type 1 subfamily. As to quaternary structure, homodimer. Mg(2+) is required as a cofactor. Requires Mn(2+) as cofactor.

The protein resides in the cytoplasm. The enzyme catalyses (2R,3S)-3-isopropylmalate + NAD(+) = 4-methyl-2-oxopentanoate + CO2 + NADH. The protein operates within amino-acid biosynthesis; L-leucine biosynthesis; L-leucine from 3-methyl-2-oxobutanoate: step 3/4. Functionally, catalyzes the oxidation of 3-carboxy-2-hydroxy-4-methylpentanoate (3-isopropylmalate) to 3-carboxy-4-methyl-2-oxopentanoate. The product decarboxylates to 4-methyl-2 oxopentanoate. This Escherichia coli (strain UTI89 / UPEC) protein is 3-isopropylmalate dehydrogenase.